Consider the following 241-residue polypeptide: ATP synthase subunit a (241 aa).

Transmembrane regions (helical) follow at residues 23–43, 83–103, 113–133, 188–208, and 209–229; these read VSFTNSSLLMLLTVGLAAAFF, YFPYILTLFVFVFLGNMLGML, IAVTAALAVGIFIAVTIIGFA, VLAGFVIMLGVVGGVVPFAVV, and LGVTVLEFFIAALQAYVFTIL.

This sequence belongs to the ATPase A chain family. F-type ATPases have 2 components, CF(1) - the catalytic core - and CF(0) - the membrane proton channel. CF(1) has five subunits: alpha(3), beta(3), gamma(1), delta(1), epsilon(1). CF(0) has four main subunits: a, b, b' and c.

It is found in the cell inner membrane. In terms of biological role, key component of the proton channel; it plays a direct role in the translocation of protons across the membrane. This chain is ATP synthase subunit a, found in Rhodospirillum rubrum (strain ATCC 11170 / ATH 1.1.1 / DSM 467 / LMG 4362 / NCIMB 8255 / S1).